The following is a 262-amino-acid chain: Dihydroorotate dehydrogenase B (NAD(+)), electron transfer subunit (262 aa).

An FAD-binding FR-type domain is found at 3–104 (QLQEMMTVVS…MGPLGNGFPV (102 aa)). Residues 53 to 56 (RPIS), 70 to 72 (LYR), and 79 to 80 (GT) each bind FAD. The [2Fe-2S] cluster site is built by cysteine 226, cysteine 231, cysteine 234, and cysteine 249.

Belongs to the PyrK family. As to quaternary structure, heterotetramer of 2 PyrK and 2 PyrD type B subunits. Requires [2Fe-2S] cluster as cofactor. The cofactor is FAD.

It participates in pyrimidine metabolism; UMP biosynthesis via de novo pathway; orotate from (S)-dihydroorotate (NAD(+) route): step 1/1. Its function is as follows. Responsible for channeling the electrons from the oxidation of dihydroorotate from the FMN redox center in the PyrD type B subunit to the ultimate electron acceptor NAD(+). The chain is Dihydroorotate dehydrogenase B (NAD(+)), electron transfer subunit from Lactococcus lactis subsp. cremoris (strain SK11).